The sequence spans 106 residues: MIVTTTPNIDGRKIQNYYGIVTGEAIMGANVVRDIFAGITDIIGGRSGAYEEKLQDARQIALKEMEQNAARMGANAVVGVDIDYEVVGQSGSMLMVSASGTAVTVV.

It belongs to the UPF0145 family.

This is UPF0145 protein Dhaf_3855 from Desulfitobacterium hafniense (strain DSM 10664 / DCB-2).